We begin with the raw amino-acid sequence, 78 residues long: Acyl carrier protein (78 aa).

In terms of domain architecture, Carrier spans 2 to 77 (STIEERVKKI…AAIDYVNSHK (76 aa)). Serine 37 is subject to O-(pantetheine 4'-phosphoryl)serine.

It belongs to the acyl carrier protein (ACP) family. Post-translationally, 4'-phosphopantetheine is transferred from CoA to a specific serine of apo-ACP by AcpS. This modification is essential for activity because fatty acids are bound in thioester linkage to the sulfhydryl of the prosthetic group.

The protein resides in the cytoplasm. Its pathway is lipid metabolism; fatty acid biosynthesis. In terms of biological role, carrier of the growing fatty acid chain in fatty acid biosynthesis. In Pseudomonas putida (strain GB-1), this protein is Acyl carrier protein.